The primary structure comprises 112 residues: Cryptic phage CTXphi transcriptional repressor RstR (112 aa).

Residues 7–61 (LANQRKAINKTQAQMADEIGISLTSYKKYESGEGLPTMENLVKIADALEISIDEL) form the HTH cro/C1-type domain. Positions 18 to 37 (QAQMADEIGISLTSYKKYES) form a DNA-binding region, H-T-H motif.

Its function is as follows. Transcriptional repressor of the integrated CTXPhi phage gene rstA2. This is Cryptic phage CTXphi transcriptional repressor RstR (rstR1) from Vibrio cholerae serotype O1 (strain ATCC 39315 / El Tor Inaba N16961).